The sequence spans 142 residues: Hemoglobin subunit alpha-1 (142 aa).

One can recognise a Globin domain in the interval Lys2–Arg142. His59 provides a ligand contact to O2. Residue His88 participates in heme b binding.

Belongs to the globin family. As to quaternary structure, major hemoglobin is a heterotetramer of two alpha-1 chains and two beta-1 chains. Red blood cells.

In terms of biological role, involved in oxygen transport from the lung to the various peripheral tissues. In Pleurodeles waltl (Iberian ribbed newt), this protein is Hemoglobin subunit alpha-1.